The primary structure comprises 406 residues: Peptidase T (406 aa).

Histidine 81 is a binding site for Zn(2+). Residue aspartate 83 is part of the active site. Aspartate 142 is a binding site for Zn(2+). Catalysis depends on glutamate 176, which acts as the Proton acceptor. Glutamate 177, aspartate 199, and histidine 381 together coordinate Zn(2+).

Belongs to the peptidase M20B family. Zn(2+) serves as cofactor.

The protein localises to the cytoplasm. The enzyme catalyses Release of the N-terminal residue from a tripeptide.. Cleaves the N-terminal amino acid of tripeptides. The protein is Peptidase T of Streptococcus pneumoniae serotype 2 (strain D39 / NCTC 7466).